The sequence spans 314 residues: Probable cell division protein WhiA (314 aa).

The H-T-H motif DNA-binding region spans 274–308 (SLKELGEMVSTGTISKSGVNHRLRKLNELADKIRS).

The protein belongs to the WhiA family.

Involved in cell division and chromosome segregation. The chain is Probable cell division protein WhiA from Staphylococcus carnosus (strain TM300).